Consider the following 90-residue polypeptide: Probable Fe(2+)-trafficking protein (90 aa).

Belongs to the Fe(2+)-trafficking protein family.

In terms of biological role, could be a mediator in iron transactions between iron acquisition and iron-requiring processes, such as synthesis and/or repair of Fe-S clusters in biosynthetic enzymes. In Vibrio vulnificus (strain CMCP6), this protein is Probable Fe(2+)-trafficking protein.